Consider the following 135-residue polypeptide: Large ribosomal subunit protein eL27 (135 aa).

Belongs to the eukaryotic ribosomal protein eL27 family.

This chain is Large ribosomal subunit protein eL27 (RPL27), found in Pisum sativum (Garden pea).